We begin with the raw amino-acid sequence, 109 residues long: Protein reprimo (109 aa).

2 N-linked (GlcNAc...) asparagine glycosylation sites follow: N7 and N18. The helical transmembrane segment at 56-76 (VVQIAVMCVLSLTVVFGIFFL) threads the bilayer. The residue at position 98 (S98) is a Phosphoserine.

Belongs to the reprimo family.

It localises to the cytoplasm. It is found in the membrane. In terms of biological role, may be involved in the regulation of p53-dependent G2 arrest of the cell cycle. Seems to induce cell cycle arrest by inhibiting CDK1 activity and nuclear translocation of the CDC2 cyclin B1 complex. The polypeptide is Protein reprimo (Rprm) (Rattus norvegicus (Rat)).